The following is a 625-amino-acid chain: MDFKYDVIVIGAGHAGCEAAAAAANLGSKTCLITMDMNKVAQMSCNPAVGGIAKGQIVREIDALGGYMGLVTDQTAIQFRILNRSKGPAMWSPRAQCDRNKFIWAWREILENIPNLHIWQDTVKEIIVENGEVVGLKTFWDVTFHARCIVLTAGTFLNGLMHVGKTQLPGGRMAEPASYKLTESIAKHGIEYGRMKTGTPVRIDGRSVHYELMDTQDGECDFHKFSFMNTSVRHLKQLQCWTCFTNEEAHNVLRNGLADSPLFNGQIQSIGPRYCPSIETKIVTFPDKEQHQLFLEPEGETTQELYLNGFSSSLPMEIQIEALKKIPAFKDLVIYRPGYAIEYDYFDPTQLKHTLESKKIKNLFFAGQVNGTTGYEEAGGQGIIAGINAHINCHGGEPFTLARDEAYIGVLIDDLVTKGVDEPYRMFTSRAEYRILLRMDDADMRLTERAYKLGLVKEDRYALLKSKREAVENIVNFTRNYSIKAALINDALENLGTTPLRQGCKLIDLINRPQITIENISEYVPAFKRELDKITDERKEEILEAAEILIKYEGYIGRERIIADKLARLESIKIKGKFDYDSLQSLSTEARQKLKKIDPETIAQASRIPGVSPSDINVLLVLSGR.

FAD-binding positions include 11–16, Val-123, and Ser-178; that span reads GAGHAG. NAD(+) is bound at residue 271 to 285; that stretch reads GPRYCPSIETKIVTF. Gln-368 serves as a coordination point for FAD.

It belongs to the MnmG family. In terms of assembly, homodimer. Heterotetramer of two MnmE and two MnmG subunits. FAD is required as a cofactor.

It is found in the cytoplasm. In terms of biological role, NAD-binding protein involved in the addition of a carboxymethylaminomethyl (cmnm) group at the wobble position (U34) of certain tRNAs, forming tRNA-cmnm(5)s(2)U34. The polypeptide is tRNA uridine 5-carboxymethylaminomethyl modification enzyme MnmG (Bacteroides fragilis (strain YCH46)).